Reading from the N-terminus, the 425-residue chain is Synaptotagmin-4 (425 aa).

Over 1–16 (MAPITTSREEFDEIPT) the chain is Vesicular. The helical transmembrane segment at 17–37 (VVGIFSAFGLVFTVSLFAWIC) threads the bilayer. The Cytoplasmic portion of the chain corresponds to 38-425 (CQRKSSKSNK…IAKWHVLCDG (388 aa)). Basic and acidic residues predominate over residues 73–83 (FGADDKNEVKN). 2 disordered regions span residues 73 to 93 (FGADDKNEVKNKPAVPKNSLH) and 127 to 147 (LEGEKESVSPESLKSSTSLTS). A Phosphoserine; by MAPK8 modification is found at Ser135. The segment covering 135–146 (SPESLKSSTSLT) has biased composition (low complexity). 2 consecutive C2 domains span residues 153–274 (KLGT…MLMN) and 287–420 (GRGE…AKWH). Residues Asp246, Ser249, and Asp252 each coordinate Ca(2+).

It belongs to the synaptotagmin family. As to quaternary structure, interacts with KIF1A; the interaction increases in presence of calcium and decreases when SYT4 is phosphorylated at Ser-135. Ca(2+) serves as cofactor. Phosphorylation at Ser-135 by MAPK8/JNK1 reduces interaction with KIF1A and neuronal dense core vesicles mobility. Expressed in melanocytes. Expressed in brain. Within brain, expression is highest in hippocampus, with substantial levels also detected in amygdala and thalamus.

The protein localises to the cytoplasmic vesicle. It localises to the secretory vesicle. The protein resides in the neuronal dense core vesicle membrane. Functionally, synaptotagmin family member which does not bind Ca(2+). Involved in neuronal dense core vesicles (DCVs) mobility through its interaction with KIF1A. Upon increased neuronal activity, phosphorylation by MAPK8/JNK1 destabilizes the interaction with KIF1A and captures DCVs to synapses. Plays a role in dendrite formation by melanocytes. The chain is Synaptotagmin-4 (SYT4) from Homo sapiens (Human).